Reading from the N-terminus, the 224-residue chain is C-reactive protein (224 aa).

An N-terminal signal peptide occupies residues 1–18 (MEKLLCFLVLTSLSHAFG). Position 19 is a pyrrolidone carboxylic acid (Gln-19). The Pentraxin (PTX) domain maps to 23–224 (SRKAFVFPKE…EVFTKPQLWP (202 aa)). Cys-54 and Cys-115 are joined by a disulfide. Residues Asp-78, Asn-79, Glu-156, Gln-157, Asp-158, and Gln-168 each contribute to the Ca(2+) site.

It belongs to the pentraxin family. As to quaternary structure, homopentamer. Pentraxin (or pentaxin) have a discoid arrangement of 5 non-covalently bound subunits. Interacts with FCN1; may regulate monocyte activation by FCN1. Ca(2+) serves as cofactor. As to expression, found in plasma.

The protein localises to the secreted. Its function is as follows. Displays several functions associated with host defense: it promotes agglutination, bacterial capsular swelling, phagocytosis and complement fixation through its calcium-dependent binding to phosphorylcholine. Can interact with DNA and histones and may scavenge nuclear material released from damaged circulating cells. This is C-reactive protein (CRP) from Homo sapiens (Human).